The chain runs to 59 residues: Large ribosomal subunit protein uL30 (59 aa).

The protein belongs to the universal ribosomal protein uL30 family. As to quaternary structure, part of the 50S ribosomal subunit.

This is Large ribosomal subunit protein uL30 from Clostridium beijerinckii (strain ATCC 51743 / NCIMB 8052) (Clostridium acetobutylicum).